Consider the following 480-residue polypeptide: MTLSFTARWRDELPATYTALLPTPLKNARLIWYNDELAQQLAIPASLFDATNGAGVWGGETLLPGMSPVAQVYSGHQFGVWAGQLGDGRGILLGEQLLADGSTLDWHLKGAGLTPYSRMGDGRAVLRSTIRESLASEAMHYLGIPTTRALSIVTSDTPVQRETQETGAMLMRLAQSHMRFGHFEHFYYRREPEKVQQLADFAIRHYWPQWQDVAEKYALWFEEVAARTGRLIAEWQTVGFAHGVMNTDNMSILGLTIDYGPFGFLDDYDPGFIGNHSDHQGRYRFDNQPSVALWNLQRLAQTLTPFIEIDALNRALDRYQDALLTHYGQRMRQKLGFFTEQKDDNVLLNELFSLMAREGSDYTRTFRMLSHTEQQSASSPLRDTFIDRAAFDAWFDRYRARLRTEAVDDALRQQQMQRVNPAIVLRNWLAQRAIDAAEQGDMAELHRLHEVLRQPFTDRDDDYASRPPEWGKRLEVSCSS.

ATP is bound by residues Gly-86, Gly-88, Arg-89, Lys-109, Asp-121, Gly-122, Arg-172, and Arg-179. The active-site Proton acceptor is the Asp-248. The Mg(2+) site is built by Asn-249 and Asp-258. Residue Asp-258 participates in ATP binding.

It belongs to the SELO family. Mg(2+) is required as a cofactor. The cofactor is Mn(2+).

The enzyme catalyses L-seryl-[protein] + ATP = 3-O-(5'-adenylyl)-L-seryl-[protein] + diphosphate. It catalyses the reaction L-threonyl-[protein] + ATP = 3-O-(5'-adenylyl)-L-threonyl-[protein] + diphosphate. It carries out the reaction L-tyrosyl-[protein] + ATP = O-(5'-adenylyl)-L-tyrosyl-[protein] + diphosphate. The catalysed reaction is L-histidyl-[protein] + UTP = N(tele)-(5'-uridylyl)-L-histidyl-[protein] + diphosphate. The enzyme catalyses L-seryl-[protein] + UTP = O-(5'-uridylyl)-L-seryl-[protein] + diphosphate. It catalyses the reaction L-tyrosyl-[protein] + UTP = O-(5'-uridylyl)-L-tyrosyl-[protein] + diphosphate. Nucleotidyltransferase involved in the post-translational modification of proteins. It can catalyze the addition of adenosine monophosphate (AMP) or uridine monophosphate (UMP) to a protein, resulting in modifications known as AMPylation and UMPylation. This chain is Protein nucleotidyltransferase YdiU, found in Salmonella paratyphi A (strain ATCC 9150 / SARB42).